Here is a 500-residue protein sequence, read N- to C-terminus: Cysteine--tRNA ligase (500 aa).

Cys29 contacts Zn(2+). The short motif at 31-41 (VTVYDLCHLGH) is the 'HIGH' region element. Zn(2+) is bound by residues Cys213, His238, and Glu242. A 'KMSKS' region motif is present at residues 270-274 (KMSKS). An ATP-binding site is contributed by Lys273.

It belongs to the class-I aminoacyl-tRNA synthetase family. Monomer. The cofactor is Zn(2+).

It localises to the cytoplasm. The enzyme catalyses tRNA(Cys) + L-cysteine + ATP = L-cysteinyl-tRNA(Cys) + AMP + diphosphate. This chain is Cysteine--tRNA ligase, found in Prochlorococcus marinus (strain NATL1A).